A 400-amino-acid polypeptide reads, in one-letter code: uncharacterized protein (400 aa).

This is an uncharacterized protein from Saccharomyces cerevisiae (strain ATCC 204508 / S288c) (Baker's yeast).